We begin with the raw amino-acid sequence, 353 residues long: Small ribosomal subunit protein uS2 (353 aa).

Residues 256–353 form a disordered region; it reads DTDEQSSAAN…TPAESTDEQA (98 aa). Low complexity-rich tracts occupy residues 263–311 and 321–339; these read AANT…AEAP and ESAT…TPAE. Residues 340-353 show a composition bias toward acidic residues; it reads AEAETPAESTDEQA.

The protein belongs to the universal ribosomal protein uS2 family.

This Beutenbergia cavernae (strain ATCC BAA-8 / DSM 12333 / CCUG 43141 / JCM 11478 / NBRC 16432 / NCIMB 13614 / HKI 0122) protein is Small ribosomal subunit protein uS2.